The chain runs to 548 residues: MTGQPLLGDLLTLASDALPEVEALFETARSALKERVTTDGKVSSKALEEEQFAAHALSWLATYVESLRQMRAWAGRLETEGRFGEMEALILQIAFGEYLAQIRGGIPMSQTETARVQDIGIELGHPGEAVRRLIQAGNTPAARARLVALMRDNHGRATFGASGLDEELEMIRDQFRRFADERVAPHAHGWHMRDELIPMEIVEALAEMGVFGLTIPEEFGGFGLSKASMVVVSEELSRGYIGVGSLGTRSEIAAELILCGGTDAQKAAWLPKLASGEILPTAVFTEPNTGSDLGSLRTRAVKDGDEWVVHGNKTWITHAARTHVMTLLARTDLETTDYRGLSMFLAEKVPGTDADPFPTPGMTGGEIEVLGYRGMKEYEIGFDGFRVKAENLLGGVEGQGFKQLMQTFESARIQTAARAIGVAQNALEVGMQYAEERKQFGKALIEFPRVAGKLAMMAVEIMVARQLTYHSAWEKDHGQRCDLEAGMAKLLGARVAWAAADNALQIHGGNGFALEYQISRILCDARILNIFEGAAEIQAQVIARRLLD.

FAD is bound by residues alanine 282 to serine 291 and tryptophan 315 to threonine 317. Serine 291 serves as a coordination point for substrate. Glutamate 409–arginine 412 contributes to the substrate binding site. FAD contacts are provided by residues arginine 437 and glutamine 505–glycine 509. The active-site Proton acceptor is the glutamate 532. Alanine 534 to glutamate 536 contributes to the FAD binding site.

The protein belongs to the acyl-CoA dehydrogenase family. Homodimer. FAD is required as a cofactor.

The enzyme catalyses (2S)-methylsuccinyl-CoA + oxidized [electron-transfer flavoprotein] + H(+) = 2-methylfumaryl-CoA + reduced [electron-transfer flavoprotein]. Functionally, involved in the ethylmalonyl-CoA pathway, a new acetyl-CoA assimilation strategy that operates in a number of bacteria and replaces the glyoxylate cycle. Catalyzes the oxidation of (2S)-methylsuccinyl-CoA to yield mesaconyl-(C1)-CoA. Highly specific for (S)-methylsuccinyl-CoA. The chain is (2S)-methylsuccinyl-CoA dehydrogenase from Cereibacter sphaeroides (Rhodobacter sphaeroides).